The chain runs to 311 residues: Pyrimidine-specific ribonucleoside hydrolase RihA (311 aa).

Histidine 240 is a catalytic residue.

Belongs to the IUNH family. RihA subfamily.

Functionally, hydrolyzes with equal efficiency cytidine or uridine to ribose and cytosine or uracil, respectively. The sequence is that of Pyrimidine-specific ribonucleoside hydrolase RihA from Escherichia coli O8 (strain IAI1).